Reading from the N-terminus, the 273-residue chain is Diaminopimelate epimerase (273 aa).

The substrate site is built by N11 and N60. The active-site Proton donor is C69. Residues 70–71, N181, and 199–200 contribute to the substrate site; these read GN and ER. The active-site Proton acceptor is the C209. Substrate is bound at residue 210–211; it reads GT.

It belongs to the diaminopimelate epimerase family. As to quaternary structure, homodimer.

The protein resides in the cytoplasm. The catalysed reaction is (2S,6S)-2,6-diaminopimelate = meso-2,6-diaminopimelate. It functions in the pathway amino-acid biosynthesis; L-lysine biosynthesis via DAP pathway; DL-2,6-diaminopimelate from LL-2,6-diaminopimelate: step 1/1. Catalyzes the stereoinversion of LL-2,6-diaminopimelate (L,L-DAP) to meso-diaminopimelate (meso-DAP), a precursor of L-lysine and an essential component of the bacterial peptidoglycan. The chain is Diaminopimelate epimerase from Helicobacter pylori (strain HPAG1).